A 66-amino-acid polypeptide reads, in one-letter code: Potassium channel toxin alpha-KTx 30.1 (66 aa).

The first 24 residues, 1–24 (MNTGFFFFVIMATGLVLTFDTIHA), serve as a signal peptide directing secretion. Disulfide bonds link C30-C50, C36-C55, and C40-C57.

The protein belongs to the short scorpion toxin superfamily. Potassium channel inhibitor family. Alpha-KTx 30 subfamily. Expressed by the venom gland.

The protein resides in the secreted. Its function is as follows. inhibits Kv1.3/KCNA3 channel (1 uM of the toxin inhibits currents by 64.1%). The sequence is that of Potassium channel toxin alpha-KTx 30.1 from Scorpiops margerisonae (Scorpion).